The following is a 142-amino-acid chain: Type II secretion system core protein G (142 aa).

Residues 1-8 constitute a propeptide, leader sequence; the sequence is MQRRQQSG. Phe-9 is modified (N-methylphenylalanine). Residues 9 to 29 form a helical membrane-spanning segment; it reads FTLIEIMVVVVILGILAALVV. A disordered region spans residues 121 to 142; sequence SLGADGKEGGSDNDADIGNWDN.

This sequence belongs to the GSP G family. As to quaternary structure, type II secretion system is composed of four main components: the outer membrane complex, the inner membrane complex, the cytoplasmic secretion ATPase and the periplasm-spanning pseudopilus. Forms homomultimers. Interacts with pseudopilin tip ternary complex made of XcpX, XcpU, XcpV and XcpW. Interacts with PilA. In terms of processing, cleaved by the prepilin peptidase. Post-translationally, methylated by prepilin peptidase at the amino group of the N-terminal phenylalanine once the leader sequence is cleaved.

It is found in the cell inner membrane. Functionally, core component of the type II secretion system required for the energy-dependent secretion of extracellular factors such as proteases and toxins from the periplasm. Pseudopilin (pilin-like) protein that polymerizes to form the pseudopilus. Further polymerization triggers pseudopilus growth. Type II pseudopilus confers increased bacterial adhesive capabilities. This chain is Type II secretion system core protein G (xcpT), found in Pseudomonas aeruginosa (strain ATCC 15692 / DSM 22644 / CIP 104116 / JCM 14847 / LMG 12228 / 1C / PRS 101 / PAO1).